A 104-amino-acid polypeptide reads, in one-letter code: Gastrin (104 aa).

The signal sequence occupies residues 1–21 (MQRLCVYVLILALALATFSEA). The propeptide occupies 22–58 (SWKPRSRLQDAPSGPGANRGLEPHGLDQLGPASHHRR). The tract at residues 22-70 (SWKPRSRLQDAPSGPGANRGLEPHGLDQLGPASHHRRQLGLQGPPQLVA) is disordered. Residues Gln59 and Gln76 each carry the pyrrolidone carboxylic acid modification. Tyr87 bears the Sulfotyrosine mark. The residue at position 92 (Phe92) is a Phenylalanine amide. Ser96 carries the phosphoserine modification. The propeptide occupies 96-104 (SAEEGDQRP).

It belongs to the gastrin/cholecystokinin family.

The protein resides in the secreted. Its function is as follows. Gastrin stimulates the stomach mucosa to produce and secrete hydrochloric acid and the pancreas to secrete its digestive enzymes. It also stimulates smooth muscle contraction and increases blood circulation and water secretion in the stomach and intestine. The protein is Gastrin (GAST) of Canis lupus familiaris (Dog).